Here is a 115-residue protein sequence, read N- to C-terminus: U3-lycotoxin-Ls1a (115 aa).

An N-terminal signal peptide occupies residues 1–20 (MKFVLLFGVFLVTLFSYSSA). Residues 21 to 44 (EMLDDFDQAAEDELLSLIEKEEAR) constitute a propeptide that is removed on maturation. 4 disulfides stabilise this stretch: cysteine 48/cysteine 63, cysteine 55/cysteine 72, cysteine 62/cysteine 87, and cysteine 74/cysteine 85.

The protein belongs to the neurotoxin 19 (CSTX) family. 01 subfamily. In terms of tissue distribution, expressed by the venom gland.

Its subcellular location is the secreted. This chain is U3-lycotoxin-Ls1a, found in Lycosa singoriensis (Wolf spider).